The chain runs to 395 residues: Digeranylgeranylglycerophospholipid reductase (395 aa).

Ala15, Asp34, Cys45, Ala46, Gly48, Arg97, Ala121, Asp276, and Gly288 together coordinate FAD. The a 2,3-bis-O-(geranylgeranyl)-sn-glycerol 1-phospholipid site is built by Arg329 and Gly365.

Belongs to the geranylgeranyl reductase family. DGGGPL reductase subfamily. FAD serves as cofactor.

It carries out the reaction a 2,3-bis-O-phytanyl-sn-glycerol 1-phospholipid + 8 A = a 2,3-bis-O-(geranylgeranyl)-sn-glycerol 1-phospholipid + 8 AH2. It catalyses the reaction 2,3-bis-O-(phytanyl)-sn-glycerol 1-phosphate + 8 A = 2,3-bis-O-(geranylgeranyl)-sn-glycerol 1-phosphate + 8 AH2. The catalysed reaction is CDP-2,3-bis-O-(geranylgeranyl)-sn-glycerol + 8 AH2 = CDP-2,3-bis-O-(phytanyl)-sn-glycerol + 8 A. The enzyme catalyses archaetidylserine + 8 AH2 = 2,3-bis-O-phytanyl-sn-glycero-3-phospho-L-serine + 8 A. It participates in membrane lipid metabolism; glycerophospholipid metabolism. Functionally, is involved in the reduction of 2,3-digeranylgeranylglycerophospholipids (unsaturated archaeols) into 2,3-diphytanylglycerophospholipids (saturated archaeols) in the biosynthesis of archaeal membrane lipids. Catalyzes the formation of archaetidic acid (2,3-di-O-phytanyl-sn-glyceryl phosphate) from 2,3-di-O-geranylgeranylglyceryl phosphate (DGGGP) via the hydrogenation of each double bond of the isoprenoid chains. Is also probably able to reduce double bonds of geranyl groups in CDP-2,3-bis-O-(geranylgeranyl)-sn-glycerol and archaetidylserine, thus acting at various stages in the biosynthesis of archaeal membrane lipids. The sequence is that of Digeranylgeranylglycerophospholipid reductase from Thermococcus gammatolerans (strain DSM 15229 / JCM 11827 / EJ3).